Here is a 447-residue protein sequence, read N- to C-terminus: GTPase Der (447 aa).

EngA-type G domains follow at residues 3 to 167 (PVIA…FAER) and 181 to 354 (TRIA…AAAM). GTP contacts are provided by residues 9–16 (GRPNVGKS), 56–60 (DTGGF), 119–122 (NKAE), 187–194 (GRPNVGKS), 234–238 (DTAGL), and 299–302 (NKWD). The KH-like domain maps to 355-439 (VKLPTPKLTR…PLRIEFRTNK (85 aa)).

It belongs to the TRAFAC class TrmE-Era-EngA-EngB-Septin-like GTPase superfamily. EngA (Der) GTPase family. Associates with the 50S ribosomal subunit.

Its function is as follows. GTPase that plays an essential role in the late steps of ribosome biogenesis. In Ralstonia nicotianae (strain ATCC BAA-1114 / GMI1000) (Ralstonia solanacearum), this protein is GTPase Der.